We begin with the raw amino-acid sequence, 60 residues long: Antimicrobial peptide Eval151 (60 aa).

The signal sequence occupies residues Met-1–Cys-23. Arg-36 bears the Arginine amide mark. Basic and acidic residues predominate over residues Arg-36 to His-54. A disordered region spans residues Arg-36–Lys-60. The propeptide occupies Gly-37–Lys-60.

It belongs to the non-disulfide-bridged peptide (NDBP) superfamily. As to expression, expressed by the venom gland.

Its subcellular location is the secreted. Functionally, probable antimicrobial peptide. Has no inhibitory activity against herpes simplex virus type 1 (HSV-1). This chain is Antimicrobial peptide Eval151, found in Euscorpiops validus (Scorpion).